The chain runs to 138 residues: ATP synthase epsilon chain (138 aa).

The protein belongs to the ATPase epsilon chain family. In terms of assembly, F-type ATPases have 2 components, CF(1) - the catalytic core - and CF(0) - the membrane proton channel. CF(1) has five subunits: alpha(3), beta(3), gamma(1), delta(1), epsilon(1). CF(0) has three main subunits: a, b and c.

The protein resides in the cell inner membrane. In terms of biological role, produces ATP from ADP in the presence of a proton gradient across the membrane. This chain is ATP synthase epsilon chain, found in Endomicrobium trichonymphae.